The following is a 198-amino-acid chain: Putative pseudouridine methyltransferase (198 aa).

S-adenosyl-L-methionine contacts are provided by Met132 and Cys186.

The protein belongs to the methyltransferase superfamily. TrmY family.

The protein resides in the cytoplasm. The polypeptide is Putative pseudouridine methyltransferase (Shewanella baltica (strain OS223)).